A 146-amino-acid polypeptide reads, in one-letter code: MLALIQRVTRASVAVDAQVVGQIGPGLLALIGIEPGDTAPQLRRLAERLLGYRVFSDEAGKMNRSLADTGGGLLLVSQFTLAADTKAGMRPSFSTAAPPEEAERAFNQLVAICREKHSGGVETGRFGAHMVVDLVNDGPVTFLLRP.

The short motif at 138–139 (GP) is the Gly-cisPro motif, important for rejection of L-amino acids element.

This sequence belongs to the DTD family. Homodimer.

Its subcellular location is the cytoplasm. The enzyme catalyses glycyl-tRNA(Ala) + H2O = tRNA(Ala) + glycine + H(+). The catalysed reaction is a D-aminoacyl-tRNA + H2O = a tRNA + a D-alpha-amino acid + H(+). An aminoacyl-tRNA editing enzyme that deacylates mischarged D-aminoacyl-tRNAs. Also deacylates mischarged glycyl-tRNA(Ala), protecting cells against glycine mischarging by AlaRS. Acts via tRNA-based rather than protein-based catalysis; rejects L-amino acids rather than detecting D-amino acids in the active site. By recycling D-aminoacyl-tRNA to D-amino acids and free tRNA molecules, this enzyme counteracts the toxicity associated with the formation of D-aminoacyl-tRNA entities in vivo and helps enforce protein L-homochirality. The chain is D-aminoacyl-tRNA deacylase from Xanthomonas campestris pv. campestris (strain 8004).